The primary structure comprises 326 residues: Beta-ketoacyl-[acyl-carrier-protein] synthase III (326 aa).

Residues cysteine 112 and histidine 251 contribute to the active site. An ACP-binding region spans residues 252–256 (QANSR). The active site involves asparagine 281.

Belongs to the thiolase-like superfamily. FabH family. As to quaternary structure, homodimer.

It localises to the cytoplasm. The catalysed reaction is malonyl-[ACP] + acetyl-CoA + H(+) = 3-oxobutanoyl-[ACP] + CO2 + CoA. Its pathway is lipid metabolism; fatty acid biosynthesis. Catalyzes the condensation reaction of fatty acid synthesis by the addition to an acyl acceptor of two carbons from malonyl-ACP. Catalyzes the first condensation reaction which initiates fatty acid synthesis and may therefore play a role in governing the total rate of fatty acid production. Possesses both acetoacetyl-ACP synthase and acetyl transacylase activities. Its substrate specificity determines the biosynthesis of branched-chain and/or straight-chain of fatty acids. The chain is Beta-ketoacyl-[acyl-carrier-protein] synthase III from Clostridium botulinum (strain Kyoto / Type A2).